The following is a 2415-amino-acid chain: Spectrin alpha chain, erythrocytic 1 (2415 aa).

Spectrin repeat units follow at residues 52-152, 157-259, 263-365, 370-471, 475-576, 580-681, 686-787, 792-894, and 898-967; these read YHYQ…SDVL, KFYQ…ESLS, DLQR…AKLK, YHRF…HQYR, DFHL…RKLL, QLLQ…GTQL, QLLQ…KKKL, KLQQ…NDLK, and QLQQ…QQQQ. Position 257 is a phosphoserine (serine 257). Positions 975–1034 constitute an SH3 domain; it reads GREARVIALYDFEARSRREVSMKKNDVLTLLSSINKDWWKVEADDHQGFVPAVYVRKLAP. The residue at position 990 (serine 990) is a Phosphoserine. Spectrin repeat units lie at residues 1085–1177, 1183–1285, 1287–1390, 1394–1489, 1499–1603, 1606–1709, 1712–1815, 1818–1921, 1924–2029, 2040–2142, and 2154–2254; these read LAYE…YQLL, VEMF…SLNE, HKFF…KMLD, ELQL…QLLT, DLKQ…KLNE, RQQR…KLKE, ALFQ…NLEE, EYLQ…SQLD, HAFQ…KLLE, LFME…QELQ, and MCQE…NLEQ. Phosphoserine is present on serine 1972. 3 consecutive EF-hand domains span residues 2267-2302, 2310-2345, and 2347-2382; these read ETLK…LNYY, EPEP…KESE, and IKTS…EQVS. Positions 2280, 2282, 2284, 2286, 2291, 2323, 2329, and 2334 each coordinate Ca(2+).

This sequence belongs to the spectrin family. Composed of non-homologous chains, alpha and beta, which aggregate to form dimers, tetramers, and higher polymers. Interacts with FASLG. Interacts with BCAM.

It is found in the cytoplasm. The protein resides in the cytoskeleton. It localises to the cell cortex. Spectrin is the major constituent of the cytoskeletal network underlying the erythrocyte plasma membrane. It associates with band 4.1 and actin to form the cytoskeletal superstructure of the erythrocyte plasma membrane. This Mus musculus (Mouse) protein is Spectrin alpha chain, erythrocytic 1 (Spta1).